Consider the following 392-residue polypeptide: MKFVDEATILVVAGDGGNGCVSFRREKYIPRGGPDGGDGGDGGDVYMQADENLNTLIDYRFEKSFRAERGQNGQSRDCTGKRGNDILIKVPVGTRIIDQGTGETLGDMTHHQQKMMVAKGGWHGLGNTRFKSSVNRTPRQKTMGTPGEKRDLQLELMLLADVGMLGLPNAGKSTFIRAVSAAKPKVADYPFTTLVPSLGVVRMDSEQSFVVADIPGLIEGASEGAGLGIRFLKHLERCRVLLHTIDLAPIDESDPVENARIILGELEKYSEKLFQKPRWLVFNKVDLLDEEEAESRAKAIAEALGWTEKYYLISAANRAGVNALCWDVMAFIKANPKEAELVAKQPEKVEFMWDDYHRQQLEEAQPEVEEDDDWDDDWDEDDEEGVETIYQR.

Positions 1 to 159 (MKFVDEATIL…RDLQLELMLL (159 aa)) constitute an Obg domain. The interval 127 to 146 (NTRFKSSVNRTPRQKTMGTP) is disordered. The span at 129-143 (RFKSSVNRTPRQKTM) shows a compositional bias: polar residues. The OBG-type G domain occupies 160–333 (ADVGMLGLPN…LCWDVMAFIK (174 aa)). Residues 166 to 173 (GLPNAGKS), 191 to 195 (FTTLV), 213 to 216 (DIPG), 283 to 286 (NKVD), and 314 to 316 (SAA) each bind GTP. The Mg(2+) site is built by Ser173 and Thr193. Residues 360-392 (QLEEAQPEVEEDDDWDDDWDEDDEEGVETIYQR) are disordered. The segment covering 364–386 (AQPEVEEDDDWDDDWDEDDEEGV) has biased composition (acidic residues).

Belongs to the TRAFAC class OBG-HflX-like GTPase superfamily. OBG GTPase family. In terms of assembly, monomer. It depends on Mg(2+) as a cofactor.

The protein localises to the cytoplasm. An essential GTPase which binds GTP, GDP and possibly (p)ppGpp with moderate affinity, with high nucleotide exchange rates and a fairly low GTP hydrolysis rate. Plays a role in control of the cell cycle, stress response, ribosome biogenesis and in those bacteria that undergo differentiation, in morphogenesis control. The polypeptide is GTPase Obg (Erwinia tasmaniensis (strain DSM 17950 / CFBP 7177 / CIP 109463 / NCPPB 4357 / Et1/99)).